The following is a 211-amino-acid chain: FMN-dependent NADH:quinone oxidoreductase 2 (211 aa).

Residues Ser10 and 17-19 (SRS) contribute to the FMN site.

The protein belongs to the azoreductase type 1 family. As to quaternary structure, homodimer. The cofactor is FMN.

It carries out the reaction 2 a quinone + NADH + H(+) = 2 a 1,4-benzosemiquinone + NAD(+). The catalysed reaction is N,N-dimethyl-1,4-phenylenediamine + anthranilate + 2 NAD(+) = 2-(4-dimethylaminophenyl)diazenylbenzoate + 2 NADH + 2 H(+). Quinone reductase that provides resistance to thiol-specific stress caused by electrophilic quinones. In terms of biological role, also exhibits azoreductase activity. Catalyzes the reductive cleavage of the azo bond in aromatic azo compounds to the corresponding amines. This chain is FMN-dependent NADH:quinone oxidoreductase 2, found in Listeria monocytogenes serovar 1/2a (strain ATCC BAA-679 / EGD-e).